Reading from the N-terminus, the 261-residue chain is Type III pantothenate kinase (261 aa).

7 to 14 (EQGNTNTM) is an ATP binding site. 108-111 (GADR) is a substrate binding site. The active-site Proton acceptor is the Asp-110. Residue Asp-130 coordinates K(+). Thr-133 provides a ligand contact to ATP. Position 187 (Thr-187) interacts with substrate.

Belongs to the type III pantothenate kinase family. As to quaternary structure, homodimer. NH4(+) serves as cofactor. The cofactor is K(+).

The protein localises to the cytoplasm. It catalyses the reaction (R)-pantothenate + ATP = (R)-4'-phosphopantothenate + ADP + H(+). It participates in cofactor biosynthesis; coenzyme A biosynthesis; CoA from (R)-pantothenate: step 1/5. Its function is as follows. Catalyzes the phosphorylation of pantothenate (Pan), the first step in CoA biosynthesis. This is Type III pantothenate kinase from Caulobacter vibrioides (strain ATCC 19089 / CIP 103742 / CB 15) (Caulobacter crescentus).